A 386-amino-acid polypeptide reads, in one-letter code: Methionine aminopeptidase 1 (386 aa).

The residue at position 2 (Ala2) is an N-acetylalanine. The C6H2-type zinc-finger motif lies at 6–59 (TRVCETDGCSSEAKLQCPTCIKLGIQGSYFCSQECFKGSWATHKLLHKKAKDEK). Positions 9, 14, 22, 25, 36, 40, 48, 52, and 53 each coordinate Zn(2+). His203 contributes to the a protein binding site. Asp220, Asp231, and His294 together coordinate Zn(2+). A protein is bound at residue His301. Residues Glu327 and Glu358 each contribute to the Zn(2+) site.

This sequence belongs to the peptidase M24A family. Methionine aminopeptidase type 1 subfamily. As to quaternary structure, associates with the 60S ribosomal subunit of the 80S translational complex. Zn(2+) serves as cofactor. It depends on Co(2+) as a cofactor. Requires Mn(2+) as cofactor. The cofactor is Fe(2+).

The protein localises to the cytoplasm. It catalyses the reaction Release of N-terminal amino acids, preferentially methionine, from peptides and arylamides.. Functionally, cotranslationally removes the N-terminal methionine from nascent proteins. The N-terminal methionine is often cleaved when the second residue in the primary sequence is small and uncharged (Met-Ala-, Cys, Gly, Pro, Ser, Thr, or Val). The polypeptide is Methionine aminopeptidase 1 (Metap1) (Mus musculus (Mouse)).